We begin with the raw amino-acid sequence, 782 residues long: Pyridoxal-dependent decarboxylase domain-containing protein 1 (782 aa).

The segment covering 26–48 (ILEDNQRPSEEEKDGKKYTRKDI) has biased composition (basic and acidic residues). Disordered regions lie at residues 26–56 (ILED…QGSG), 673–695 (QTTG…AGQK), 702–721 (RNSD…EVES), and 726–782 (PMPE…DSLR). Composition is skewed to polar residues over residues 703–714 (NSDAMSETSSIS) and 747–782 (AEQS…DSLR).

Belongs to the group II decarboxylase family. It depends on pyridoxal 5'-phosphate as a cofactor.

The protein is Pyridoxal-dependent decarboxylase domain-containing protein 1 (pdxdc1) of Xenopus laevis (African clawed frog).